We begin with the raw amino-acid sequence, 319 residues long: Acetyl esterase (319 aa).

Residues 91 to 93 (HGG) carry the Involved in the stabilization of the negatively charged intermediate by the formation of the oxyanion hole motif. Active-site residues include Ser165, Asp262, and His292.

It belongs to the 'GDXG' lipolytic enzyme family. As to quaternary structure, homodimer. Interacts with MalT and MelA.

The protein resides in the cytoplasm. Its function is as follows. Displays esterase activity towards short chain fatty esters (acyl chain length of up to 8 carbons). Able to hydrolyze triacetylglycerol (triacetin) and tributyrylglycerol (tributyrin), but not trioleylglycerol (triolein) or cholesterol oleate. Negatively regulates MalT activity by antagonizing maltotriose binding. Inhibits MelA galactosidase activity. The protein is Acetyl esterase of Escherichia coli O7:K1 (strain IAI39 / ExPEC).